The chain runs to 230 residues: Voltage-gated hydrogen channel 1 (230 aa).

Residues 1–58 are Cytoplasmic-facing; it reads MAGCLRHFTSVGDDTKKREWKQEDVEVAYEEPLKNTPHPFIASYSFRGALKWLLSSHK. The chain crosses the membrane as a helical span at residues 59 to 79; it reads FQIVIICLVILDALFVLVEVL. Residues 80–96 lie on the Extracellular side of the membrane; that stretch reads LDLELLAEKVDHIIPEI. A helical membrane pass occupies residues 97–119; that stretch reads FHYLSISVLTFFILEIAGKLYAF. The Cytoplasmic portion of the chain corresponds to 120–127; sequence RLEFFHHK. A helical membrane pass occupies residues 128–148; sequence FEVFDAAIVVISFIIDIVYIS. Over 149–155 the chain is Extracellular; sequence REDIFNA. The chain crosses the membrane as a helical span at residues 156–176; the sequence is VGLLILLRLWRVARIVNGVIV. Residues 177–230 are Cytoplasmic-facing; the sequence is SVKTRAEEKMHKLKEQKGSLLEKVAQLEQQCAQQEQEIGRLHKLLQEHNVFPAS. The stretch at 178 to 225 forms a coiled coil; it reads VKTRAEEKMHKLKEQKGSLLEKVAQLEQQCAQQEQEIGRLHKLLQEHN.

The protein belongs to the hydrogen channel family. Homodimer.

The protein resides in the membrane. Its subcellular location is the cell membrane. Its function is as follows. Mediates the voltage-dependent proton permeability of excitable membranes. Forms a proton-selective channel through which protons may pass in accordance with their electrochemical gradient. The chain is Voltage-gated hydrogen channel 1 (hvcn1) from Xenopus laevis (African clawed frog).